The following is a 347-amino-acid chain: Leucine-rich repeat-containing protein 69 (347 aa).

LRR repeat units lie at residues N15–P37, N38–T60, Q61–L82, S84–G105, R108–L129, S131–L152, H154–L175, N177–L198, and K200–R222.

This sequence belongs to the LRRC69 family.

This Mus musculus (Mouse) protein is Leucine-rich repeat-containing protein 69 (Lrrc69).